Consider the following 241-residue polypeptide: UDP-2,3-diacylglucosamine hydrolase (241 aa).

Residues Asp8, His10, Asp41, Asn79, and His114 each contribute to the Mn(2+) site. Asn79 to Arg80 provides a ligand contact to substrate. Substrate contacts are provided by Asp122, Ser160, Lys167, and His195. Residues His195 and His197 each contribute to the Mn(2+) site.

This sequence belongs to the LpxH family. It depends on Mn(2+) as a cofactor.

The protein resides in the cell inner membrane. It catalyses the reaction UDP-2-N,3-O-bis[(3R)-3-hydroxytetradecanoyl]-alpha-D-glucosamine + H2O = 2-N,3-O-bis[(3R)-3-hydroxytetradecanoyl]-alpha-D-glucosaminyl 1-phosphate + UMP + 2 H(+). It functions in the pathway glycolipid biosynthesis; lipid IV(A) biosynthesis; lipid IV(A) from (3R)-3-hydroxytetradecanoyl-[acyl-carrier-protein] and UDP-N-acetyl-alpha-D-glucosamine: step 4/6. Its function is as follows. Hydrolyzes the pyrophosphate bond of UDP-2,3-diacylglucosamine to yield 2,3-diacylglucosamine 1-phosphate (lipid X) and UMP by catalyzing the attack of water at the alpha-P atom. Involved in the biosynthesis of lipid A, a phosphorylated glycolipid that anchors the lipopolysaccharide to the outer membrane of the cell. This Azotobacter vinelandii (strain DJ / ATCC BAA-1303) protein is UDP-2,3-diacylglucosamine hydrolase.